An 81-amino-acid chain; its full sequence is ATP synthase subunit c (81 aa).

Helical transmembrane passes span 5–25 and 57–77; these read VAAA…IGPG and LAFM…LLFA.

It belongs to the ATPase C chain family. F-type ATPases have 2 components, F(1) - the catalytic core - and F(0) - the membrane proton channel. F(1) has five subunits: alpha(3), beta(3), gamma(1), delta(1), epsilon(1). F(0) has four main subunits: a(1), b(1), b'(1) and c(10-14). The alpha and beta chains form an alternating ring which encloses part of the gamma chain. F(1) is attached to F(0) by a central stalk formed by the gamma and epsilon chains, while a peripheral stalk is formed by the delta, b and b' chains.

The protein localises to the cellular thylakoid membrane. In terms of biological role, f(1)F(0) ATP synthase produces ATP from ADP in the presence of a proton or sodium gradient. F-type ATPases consist of two structural domains, F(1) containing the extramembraneous catalytic core and F(0) containing the membrane proton channel, linked together by a central stalk and a peripheral stalk. During catalysis, ATP synthesis in the catalytic domain of F(1) is coupled via a rotary mechanism of the central stalk subunits to proton translocation. Functionally, key component of the F(0) channel; it plays a direct role in translocation across the membrane. A homomeric c-ring of between 10-14 subunits forms the central stalk rotor element with the F(1) delta and epsilon subunits. This chain is ATP synthase subunit c, found in Microcystis aeruginosa (strain NIES-843 / IAM M-2473).